A 437-amino-acid chain; its full sequence is MAGGPPKALPSTGPHSLRDMPHPLAGSSSEEAVGGDSTPSPDLLMARSFGDKDLILPNGGTPAGTSSPASSSSLLNRLQLDDDIDGETRDLFVIVDDPKKHVCTMETYITYRITTKSTRVEFDLPEYSVRRRYQDFDWLRSKLEESQPTHLIPPLPEKFVVKGVVDRFSEEFVETRRKALDKFLKRITDHPVLSFNEHFNIFLTAKDLNAYKKQGIALLTRMGESVKHVTGGYKLRTRPLEFAAIGDYLDTFALKLGTIDRIAQRIIKEEIEYLVELREYGPVYSTWSALEGELAEPLEGVSACIGNCSTALEELTDDMTEDFLPVLREYILYSDSMKSVLKKRDQVQAEYEAKLEAVALRKEDRPKVPADVEKCQDRMECFNADLKADMERWQNNKRQDFRQLLMGMADKNIQYYEKCLMAWESIIPLLQEKQEAK.

Disordered stretches follow at residues 1 to 44 and 54 to 73; these read MAGG…PDLL and LILPNGGTPAGTSSPASSSS. Threonine 38 carries the post-translational modification Phosphothreonine. Position 40 is a phosphoserine (serine 40). The span at 63 to 73 shows a compositional bias: low complexity; the sequence is AGTSSPASSSS. In terms of domain architecture, PX spans 89–210; it reads RDLFVIVDDP…IFLTAKDLNA (122 aa). A 1,2-diacyl-sn-glycero-3-phospho-(1D-myo-inositol-3-phosphate) is bound by residues arginine 132, glutamine 134, lysine 162, and arginine 176. The region spanning 234 to 437 is the BAR domain; that stretch reads KLRTRPLEFA…PLLQEKQEAK (204 aa).

Belongs to the sorting nexin family. As to quaternary structure, heterodimer; heterodimerizes with SNX4.

It is found in the early endosome membrane. Functionally, involved in the regulation of endocytosis and in several stages of intracellular trafficking. Together with SNX4, involved in autophagosome assembly. The polypeptide is Sorting nexin-30 (Homo sapiens (Human)).